Here is a 423-residue protein sequence, read N- to C-terminus: MTNLEEIGARARAAGRRLALMPTERKNAALEAIAAALLDEANAAEVLAANADDVAAGRDAGLSPALIDRMTLTPQRLAAIAADTRTVAGLPDPVGERFDATVLENGLRVHKRRVPLGVVGVIYEARPNVTVDVAALCLKSGNAAILRGGKEITRSCAALTRLIQNALAQTGLPADAIQVIDNPDRALVEQLLRLDRYVDVIIPRGGAGLHRFCREKASIPVITGGIGVCHIYVDQAADLEMVVPIVHNAKVQRPSVCNALDTLLVHRAVAAEMLPAVARDLLASNVELRVDEEAMALLRAAGFDTPQIVPAQESDFGVEFMALILSIRVVAGLDEALEHIARFGDHSDAIITRDPATAEAFVQAVDSSAVFVNASTRFNDGGQLGLGAEIAISTQKLHARGPMALRELTSYKWVVEGDGHVRA.

The protein belongs to the gamma-glutamyl phosphate reductase family.

It is found in the cytoplasm. The catalysed reaction is L-glutamate 5-semialdehyde + phosphate + NADP(+) = L-glutamyl 5-phosphate + NADPH + H(+). It functions in the pathway amino-acid biosynthesis; L-proline biosynthesis; L-glutamate 5-semialdehyde from L-glutamate: step 2/2. In terms of biological role, catalyzes the NADPH-dependent reduction of L-glutamate 5-phosphate into L-glutamate 5-semialdehyde and phosphate. The product spontaneously undergoes cyclization to form 1-pyrroline-5-carboxylate. This chain is Gamma-glutamyl phosphate reductase, found in Roseiflexus castenholzii (strain DSM 13941 / HLO8).